The sequence spans 743 residues: Apo-petrobactin exporter (743 aa).

A run of 12 helical transmembrane segments spans residues 20–40, 199–219, 223–243, 258–278, 303–323, 337–357, 406–426, 561–581, 584–604, 613–633, 672–692, and 694–714; these read WITL…LPQV, ADVK…ILLY, ILAI…SPTL, AISI…LFLI, GGAI…LLLA, VAVF…LLIF, WTII…VPRI, DEAV…LVYL, IVAM…ALGA, MGAP…LVAL, AGLI…QVLV, and FGIV…PLLV.

Belongs to the resistance-nodulation-cell division (RND) (TC 2.A.6) family. MmpL subfamily.

It is found in the cell membrane. Functionally, exports the siderophore petrobactin. In Bacillus anthracis, this protein is Apo-petrobactin exporter.